Here is a 187-residue protein sequence, read N- to C-terminus: UPF0301 protein Spro_4027 (187 aa).

Belongs to the UPF0301 (AlgH) family.

The sequence is that of UPF0301 protein Spro_4027 from Serratia proteamaculans (strain 568).